Consider the following 752-residue polypeptide: GTPase-activating protein rrc-1 (752 aa).

The 80-residue stretch at 165 to 244 folds into the SH3 domain; that stretch reads PAIAAAVVTK…PRDCVMLIDD (80 aa). The 183-residue stretch at 281–463 folds into the Rho-GAP domain; that stretch reads LELTELFMRT…FCIENSDSLF (183 aa). 2 disordered regions span residues 523–552 and 582–609; these read STGELCGSPPSEVKWRSRSTRSHSTDATFQ and RSMRPTSRPPPSPRTRRARFSNGGGANN.

Functions as a GTPase-activating protein (GAP) for ced-10/RAC-1 and CDC42. The polypeptide is GTPase-activating protein rrc-1 (Caenorhabditis briggsae).